An 874-amino-acid polypeptide reads, in one-letter code: Leucine--tRNA ligase (874 aa).

Positions P43–H53 match the 'HIGH' region motif. The 'KMSKS' region motif lies at K630 to S634. K633 contacts ATP.

It belongs to the class-I aminoacyl-tRNA synthetase family.

The protein resides in the cytoplasm. The enzyme catalyses tRNA(Leu) + L-leucine + ATP = L-leucyl-tRNA(Leu) + AMP + diphosphate. This chain is Leucine--tRNA ligase, found in Bradyrhizobium sp. (strain ORS 278).